Here is a 161-residue protein sequence, read N- to C-terminus: Non-secretory ribonuclease (161 aa).

A signal peptide spans 1–27 (MVPKLFTSQICLLLLLGLMGVEGSLHA). A C-linked (Man) tryptophan glycan is attached at Trp34. Catalysis depends on His42, which acts as the Proton acceptor. A glycan (N-linked (GlcNAc...) asparagine) is linked at Asn44. 4 disulfides stabilise this stretch: Cys50–Cys110, Cys64–Cys123, Cys82–Cys138, and Cys89–Cys98. Tyr60 carries the 3'-nitrotyrosine modification. 65 to 69 (KNQNT) serves as a coordination point for substrate. N-linked (GlcNAc...) asparagine glycans are attached at residues Asn86, Asn92, Asn111, and Asn119. Catalysis depends on His156, which acts as the Proton donor.

It belongs to the pancreatic ribonuclease family. In terms of assembly, interacts with and forms a tight 1:1 complex with RNH1. Dimerization of two such complexes may occur.

Its subcellular location is the lysosome. It localises to the cytoplasmic granule. It carries out the reaction an [RNA] containing cytidine + H2O = an [RNA]-3'-cytidine-3'-phosphate + a 5'-hydroxy-ribonucleotide-3'-[RNA].. It catalyses the reaction an [RNA] containing uridine + H2O = an [RNA]-3'-uridine-3'-phosphate + a 5'-hydroxy-ribonucleotide-3'-[RNA].. Functionally, this is a non-secretory ribonuclease. It is a pyrimidine specific nuclease with a slight preference for U. Cytotoxin and helminthotoxin. Possesses a wide variety of biological activities. The protein is Non-secretory ribonuclease (RNASE2) of Nomascus leucogenys (Northern white-cheeked gibbon).